A 1226-amino-acid polypeptide reads, in one-letter code: AF4/FMR2 family member 3 (1226 aa).

Positions 24-37 (RNALRRKERERRNQ) are enriched in basic and acidic residues. 5 disordered regions span residues 24-65 (RNAL…GDEL), 116-164 (SRAQ…RATQ), 197-299 (ERPP…GETN), 323-496 (KVEP…SNQY), and 523-728 (IKST…SINA). Polar residues predominate over residues 42–52 (DDGTFNSSYSL). A compositionally biased stretch (low complexity) spans 123–132 (SSICSTTTST). Polar residues-rich tracts occupy residues 251–261 (LKSSSETSVHC) and 334–344 (KDSQLVSSGHN). Residues 381-392 (QQAAQRTALRAL) are compositionally biased toward low complexity. A compositionally biased stretch (polar residues) spans 396 to 408 (AVVQQPNCRTSVP). The span at 409-445 (SSKGSSSSSSSGSSSSSSDSESSSGSDSETESSSSES) shows a compositional bias: low complexity. The segment covering 485–496 (QNESHGSESNQY) has biased composition (polar residues). The segment covering 523–533 (IKSTCKEEQRP) has biased composition (basic and acidic residues). Low complexity-rich tracts occupy residues 550–561 (PPAAVAVAVSAA) and 569–579 (CAPAENAPAPA). Residues 589–607 (RRTERTSAGDGANCHRPEE) show a composition bias toward basic and acidic residues. Residues 668-678 (TESSSSSSSSD) are compositionally biased toward low complexity. Residues 692–705 (KAQTVAASASSGND) show a composition bias toward polar residues. A Phosphoserine modification is found at Ser-755. Disordered regions lie at residues 783-856 (PQEP…LSAN), 879-964 (PISP…RDCK), and 1100-1138 (AAQA…SLSN). Residues 830–842 (REIKKSQGEKDSS) are compositionally biased toward basic and acidic residues. Over residues 843 to 856 (SRLATSTSNTLSAN) the composition is skewed to polar residues. Ser-881 is subject to Phosphoserine. The span at 894-909 (EDLTSSSRPNGNSLFT) shows a compositional bias: polar residues.

It belongs to the AF4 family. Preferentially expressed in lymphoid tissues, highest levels being found in the thymus.

It localises to the nucleus. In terms of biological role, putative transcription activator that may function in lymphoid development and oncogenesis. Binds, in vitro, to double-stranded DNA. This Homo sapiens (Human) protein is AF4/FMR2 family member 3.